Consider the following 121-residue polypeptide: Ribonuclease P protein component 4 (121 aa).

Cys-63, Cys-66, Cys-89, and Cys-92 together coordinate Zn(2+).

The protein belongs to the eukaryotic/archaeal RNase P protein component 4 family. As to quaternary structure, consists of a catalytic RNA component and at least 4-5 protein subunits. Zn(2+) is required as a cofactor.

It is found in the cytoplasm. It catalyses the reaction Endonucleolytic cleavage of RNA, removing 5'-extranucleotides from tRNA precursor.. Part of ribonuclease P, a protein complex that generates mature tRNA molecules by cleaving their 5'-ends. The chain is Ribonuclease P protein component 4 from Methanobrevibacter smithii (strain ATCC 35061 / DSM 861 / OCM 144 / PS).